A 406-amino-acid polypeptide reads, in one-letter code: L-cysteine:1D-myo-inositol 2-amino-2-deoxy-alpha-D-glucopyranoside ligase (406 aa).

Position 45 (Cys-45) interacts with Zn(2+). L-cysteinyl-5'-AMP is bound by residues 45-48 (CGIT), Thr-60, and 83-85 (NIT). A 'HIGH' region motif is present at residues 47-57 (ITPYDATHMGH). The short motif at 185 to 190 (ERGGDP) is the 'ERGGDP' region element. Trp-225 contacts L-cysteinyl-5'-AMP. Zn(2+) is bound at residue Cys-229. 247–249 (GSD) provides a ligand contact to L-cysteinyl-5'-AMP. Residue His-254 coordinates Zn(2+). Val-281 is an L-cysteinyl-5'-AMP binding site. The short motif at 287 to 291 (KMSKS) is the 'KMSKS' region element.

The protein belongs to the class-I aminoacyl-tRNA synthetase family. MshC subfamily. Monomer. Zn(2+) serves as cofactor.

It carries out the reaction 1D-myo-inositol 2-amino-2-deoxy-alpha-D-glucopyranoside + L-cysteine + ATP = 1D-myo-inositol 2-(L-cysteinylamino)-2-deoxy-alpha-D-glucopyranoside + AMP + diphosphate + H(+). Catalyzes the ATP-dependent condensation of GlcN-Ins and L-cysteine to form L-Cys-GlcN-Ins. The protein is L-cysteine:1D-myo-inositol 2-amino-2-deoxy-alpha-D-glucopyranoside ligase of Kribbella flavida (strain DSM 17836 / JCM 10339 / NBRC 14399).